Consider the following 156-residue polypeptide: Large ribosomal subunit protein uL15 (156 aa).

A disordered region spans residues 25–48; it reads RGIGCGKGKTSGRGHKGQKARSGV. Residues 34-43 are compositionally biased toward basic residues; that stretch reads TSGRGHKGQK.

The protein belongs to the universal ribosomal protein uL15 family. Part of the 50S ribosomal subunit.

Binds to the 23S rRNA. This Wolbachia pipientis subsp. Culex pipiens (strain wPip) protein is Large ribosomal subunit protein uL15.